Here is a 208-residue protein sequence, read N- to C-terminus: Large ribosomal subunit protein uL3 (208 aa).

Residue Gln149 is modified to N5-methylglutamine.

Belongs to the universal ribosomal protein uL3 family. Part of the 50S ribosomal subunit. Forms a cluster with proteins L14 and L19. Methylated by PrmB.

In terms of biological role, one of the primary rRNA binding proteins, it binds directly near the 3'-end of the 23S rRNA, where it nucleates assembly of the 50S subunit. The chain is Large ribosomal subunit protein uL3 from Glaesserella parasuis serovar 5 (strain SH0165) (Haemophilus parasuis).